The sequence spans 396 residues: Elongation factor Tu (396 aa).

Positions 10–206 constitute a tr-type G domain; that stretch reads KPHVNVGTIG…ALDSYIPEPE (197 aa). Residues 19-26 are G1; the sequence is GHVDHGKT. A GTP-binding site is contributed by 19-26; that stretch reads GHVDHGKT. T26 is a binding site for Mg(2+). Positions 60–64 are G2; sequence GITIN. Residues 81–84 are G3; it reads DCPG. Residues 81–85 and 136–139 contribute to the GTP site; these read DCPGH and NKAD. A G4 region spans residues 136-139; it reads NKAD. Residues 174 to 176 form a G5 region; that stretch reads SAL.

Belongs to the TRAFAC class translation factor GTPase superfamily. Classic translation factor GTPase family. EF-Tu/EF-1A subfamily. As to quaternary structure, monomer.

It is found in the cytoplasm. It carries out the reaction GTP + H2O = GDP + phosphate + H(+). GTP hydrolase that promotes the GTP-dependent binding of aminoacyl-tRNA to the A-site of ribosomes during protein biosynthesis. The sequence is that of Elongation factor Tu from Nitrosomonas europaea (strain ATCC 19718 / CIP 103999 / KCTC 2705 / NBRC 14298).